A 560-amino-acid chain; its full sequence is SWI/SNF complex subunit SWI3A homolog (560 aa).

Residues 1–13 (MSPPVAGAASSGD) are compositionally biased toward low complexity. The disordered stretch occupies residues 1–22 (MSPPVAGAASSGDGPPGRPPRE). In terms of domain architecture, SWIRM spans 24-127 (YTIPASSGWF…FSASPSRPEA (104 aa)). Residues 242–293 (HSSSAWTDAETLLLLEGVLKHGDDWDLIAQHVRTKNKSECIARLIQLPFGEH) form the SANT domain. Over residues 311 to 330 (TTDGKVNKSTVKESSSQPTE) the composition is skewed to polar residues. Disordered stretches follow at residues 311-352 (TTDG…EEHP) and 414-445 (QTRA…PDKK). Residues 331–342 (TVDDMQIDGNED) are compositionally biased toward acidic residues. Composition is skewed to basic and acidic residues over residues 343–352 (GADKSVEEHP) and 424–445 (RQSD…PDKK).

Interacts with LFR.

It localises to the nucleus. Component of a multiprotein complex equivalent of the SWI/SNF complex, an ATP-dependent chromatin-remodeling complex, which is required for the positive and negative regulation of gene expression of a large number of genes. It changes chromatin structure by altering DNA-histone contacts within a nucleosome, leading eventually to a change in nucleosome position, thus facilitating or repressing binding of gene-specific transcription factors. This is SWI/SNF complex subunit SWI3A homolog from Oryza sativa subsp. japonica (Rice).